The primary structure comprises 326 residues: DNA polymerase III subunit delta' (326 aa).

As to quaternary structure, DNA polymerase III contains a core (composed of alpha, epsilon and theta chains) that associates with a tau subunit. This core dimerizes to form the POLIII' complex. PolIII' associates with the gamma complex (composed of gamma, delta, delta', psi and chi chains) and with the beta chain to form the complete DNA polymerase III complex.

It catalyses the reaction DNA(n) + a 2'-deoxyribonucleoside 5'-triphosphate = DNA(n+1) + diphosphate. Functionally, DNA polymerase III is a complex, multichain enzyme responsible for most of the replicative synthesis in bacteria. This DNA polymerase also exhibits 3' to 5' exonuclease activity. This is DNA polymerase III subunit delta' (holB) from Buchnera aphidicola subsp. Acyrthosiphon pisum (strain APS) (Acyrthosiphon pisum symbiotic bacterium).